The sequence spans 591 residues: L-fucose isomerase (591 aa).

Catalysis depends on proton acceptor residues glutamate 337 and aspartate 361. Positions 337, 361, and 528 each coordinate Mn(2+).

Belongs to the L-fucose isomerase family. Homohexamer. The cofactor is Mn(2+).

Its subcellular location is the cytoplasm. The catalysed reaction is L-fucose = L-fuculose. The protein operates within carbohydrate degradation; L-fucose degradation; L-lactaldehyde and glycerone phosphate from L-fucose: step 1/3. Its function is as follows. Converts the aldose L-fucose into the corresponding ketose L-fuculose. This Escherichia coli O157:H7 (strain EC4115 / EHEC) protein is L-fucose isomerase.